The chain runs to 217 residues: Cytochrome b5 domain-containing protein 1 (217 aa).

One can recognise a Cytochrome b5 heme-binding domain in the interval P6 to H72. H41 and H72 together coordinate heme.

It belongs to the cytochrome b5 family.

It localises to the cytoplasm. Its subcellular location is the cytoskeleton. The protein localises to the cilium axoneme. Functionally, radial spoke stalk protein that binds heme under oxidizing conditions. Required for the coordinated beating of multiple cilia maybe by functioning in a redox signaling pathway. This is Cytochrome b5 domain-containing protein 1 (cyb5d1) from Xenopus tropicalis (Western clawed frog).